The chain runs to 178 residues: uncharacterized protein (178 aa).

Belongs to the IIV-6 136R family.

This is an uncharacterized protein from Invertebrate iridescent virus 6 (IIV-6).